We begin with the raw amino-acid sequence, 133 residues long: Large ribosomal subunit protein eL14 (133 aa).

The protein belongs to the eukaryotic ribosomal protein eL14 family.

In Griffithsia japonica (Red alga), this protein is Large ribosomal subunit protein eL14 (RPL14).